We begin with the raw amino-acid sequence, 222 residues long: Superoxide dismutase [Mn], mitochondrial (222 aa).

A mitochondrion-targeting transit peptide spans 1 to 24 (MLSRAVCGTGRQLAPALGYLGSRQ). Histidine 50 lines the Mn(2+) pocket. Tyrosine 58 bears the 3'-nitrotyrosine mark. An N6-acetyllysine; alternate mark is found at lysine 68 and lysine 75. 2 positions are modified to N6-succinyllysine; alternate: lysine 68 and lysine 75. Mn(2+) is bound at residue histidine 98. Lysine 114 is modified (N6-acetyllysine). N6-acetyllysine; alternate occurs at positions 122 and 130. 2 positions are modified to N6-succinyllysine; alternate: lysine 122 and lysine 130. Mn(2+) is bound by residues aspartate 183 and histidine 187. Lysine 202 bears the N6-acetyllysine mark.

This sequence belongs to the iron/manganese superoxide dismutase family. In terms of assembly, homotetramer. Requires Mn(2+) as cofactor. Post-translationally, nitrated under oxidative stress. Nitration coupled with oxidation inhibits the catalytic activity. Acetylation at Lys-122 decreases enzymatic activity. Deacetylated by SIRT3 upon exposure to ionizing radiations or after long fasting. In terms of processing, polyubiquitinated; leading to proteasomal degradation. Deubiquitinated by USP36 which increases protein stability.

It is found in the mitochondrion matrix. It catalyses the reaction 2 superoxide + 2 H(+) = H2O2 + O2. Functionally, destroys superoxide anion radicals which are normally produced within the cells and which are toxic to biological systems. This is Superoxide dismutase [Mn], mitochondrial (SOD2) from Macaca fascicularis (Crab-eating macaque).